The sequence spans 308 residues: Probable GTP 3',8-cyclase (308 aa).

Residues 4–224 (RFGRPLEDLR…QIRKKHFRPR (221 aa)) enclose the Radical SAM core domain. Arg-13 contacts GTP. 3 residues coordinate [4Fe-4S] cluster: Cys-20, Cys-24, and Cys-27. Lys-60 serves as a coordination point for GTP. An S-adenosyl-L-methionine-binding site is contributed by Gly-64. Thr-90 provides a ligand contact to GTP. Ser-114 is an S-adenosyl-L-methionine binding site. Lys-151 serves as a coordination point for GTP. Positions 245 and 248 each coordinate [4Fe-4S] cluster. Residue 250–252 (RIR) participates in GTP binding. Cys-262 serves as a coordination point for [4Fe-4S] cluster.

This sequence belongs to the radical SAM superfamily. MoaA family. [4Fe-4S] cluster is required as a cofactor.

It carries out the reaction GTP + AH2 + S-adenosyl-L-methionine = (8S)-3',8-cyclo-7,8-dihydroguanosine 5'-triphosphate + 5'-deoxyadenosine + L-methionine + A + H(+). It functions in the pathway cofactor biosynthesis; molybdopterin biosynthesis. Functionally, catalyzes the cyclization of GTP to (8S)-3',8-cyclo-7,8-dihydroguanosine 5'-triphosphate. The polypeptide is Probable GTP 3',8-cyclase (Saccharolobus islandicus (strain Y.N.15.51 / Yellowstone #2) (Sulfolobus islandicus)).